A 107-amino-acid polypeptide reads, in one-letter code: Pro-corazonin (107 aa).

A signal peptide spans 1-21 (MVNSQILILFILSLTITIVMC). Gln22 carries the pyrrolidone carboxylic acid modification. Position 32 is an asparagine amide (Asn32). The propeptide occupies 88–107 (SFSENMINDHRQPAPTNNNY).

This sequence belongs to the corazonin family. In terms of tissue distribution, in the adult brain, expressed in four neurons of the lateral protocerebrum project axons towards the retrocerebral complex.

Its subcellular location is the secreted. In terms of biological role, cardioactive peptide. Corazonin is probably involved in the physiological regulation of the heart beat. The protein is Pro-corazonin of Apis mellifera (Honeybee).